The chain runs to 344 residues: Sulfate/thiosulfate import ATP-binding protein CysA (344 aa).

The region spanning 3 to 237 (IEVRNLVKKF…PATAFVHGFI (235 aa)) is the ABC transporter domain. An ATP-binding site is contributed by 35–42 (GPSGSGKT).

Belongs to the ABC transporter superfamily. Sulfate/tungstate importer (TC 3.A.1.6) family. The complex is composed of two ATP-binding proteins (CysA), two transmembrane proteins (CysT and CysW) and a solute-binding protein (CysP).

The protein localises to the cell inner membrane. It catalyses the reaction sulfate(out) + ATP + H2O = sulfate(in) + ADP + phosphate + H(+). The catalysed reaction is thiosulfate(out) + ATP + H2O = thiosulfate(in) + ADP + phosphate + H(+). Its function is as follows. Part of the ABC transporter complex CysAWTP involved in sulfate/thiosulfate import. Responsible for energy coupling to the transport system. The chain is Sulfate/thiosulfate import ATP-binding protein CysA from Bradyrhizobium diazoefficiens (strain JCM 10833 / BCRC 13528 / IAM 13628 / NBRC 14792 / USDA 110).